Here is a 354-residue protein sequence, read N- to C-terminus: S-adenosylmethionine:tRNA ribosyltransferase-isomerase (354 aa).

This sequence belongs to the QueA family. As to quaternary structure, monomer.

The protein localises to the cytoplasm. The enzyme catalyses 7-aminomethyl-7-carbaguanosine(34) in tRNA + S-adenosyl-L-methionine = epoxyqueuosine(34) in tRNA + adenine + L-methionine + 2 H(+). It functions in the pathway tRNA modification; tRNA-queuosine biosynthesis. In terms of biological role, transfers and isomerizes the ribose moiety from AdoMet to the 7-aminomethyl group of 7-deazaguanine (preQ1-tRNA) to give epoxyqueuosine (oQ-tRNA). The protein is S-adenosylmethionine:tRNA ribosyltransferase-isomerase of Salmonella newport (strain SL254).